Here is a 251-residue protein sequence, read N- to C-terminus: MSRYIGPRLRIIRRIGKLRGFTRKKPFRRSFRGRGALQGKVIPPGQHGLTKLFKSRPFDSNESDYLIRLKVKQRLRYNYGITEKQLVKYVRQAKKMKESTGQVLLQLLEMRLDNIVFRLNMAPTICAARQLISHGHIHVNSKKVNIASYMCKPKDVISVSMKQSSLKLVNRNLQEYSQKMSAYKKRLERTLAYVLFQRNISPNMANALEYINQGKVQVNNRKVLLPNYLCHSKDMISVKTDKGIRKFQFSE.

2 S4 RNA-binding domains span residues 110–170 (MRLD…KLVN) and 189–251 (RTLA…QFSE).

This sequence belongs to the universal ribosomal protein uS4 family. Part of the 30S ribosomal subunit. Contacts protein S5. The interaction surface between S4 and S5 is involved in control of translational fidelity.

The protein resides in the plastid. It is found in the chloroplast. Its function is as follows. One of the primary rRNA binding proteins, it binds directly to 16S rRNA where it nucleates assembly of the body of the 30S subunit. In terms of biological role, with S5 and S12 plays an important role in translational accuracy. The polypeptide is Small ribosomal subunit protein uS4c (rps4) (Tetradesmus obliquus (Green alga)).